We begin with the raw amino-acid sequence, 345 residues long: Tetraacyldisaccharide 4'-kinase (345 aa).

51-58 (HVGGAGKT) contacts ATP.

The protein belongs to the LpxK family.

The enzyme catalyses a lipid A disaccharide + ATP = a lipid IVA + ADP + H(+). It functions in the pathway glycolipid biosynthesis; lipid IV(A) biosynthesis; lipid IV(A) from (3R)-3-hydroxytetradecanoyl-[acyl-carrier-protein] and UDP-N-acetyl-alpha-D-glucosamine: step 6/6. In terms of biological role, transfers the gamma-phosphate of ATP to the 4'-position of a tetraacyldisaccharide 1-phosphate intermediate (termed DS-1-P) to form tetraacyldisaccharide 1,4'-bis-phosphate (lipid IVA). The chain is Tetraacyldisaccharide 4'-kinase from Bradyrhizobium sp. (strain BTAi1 / ATCC BAA-1182).